Reading from the N-terminus, the 257-residue chain is UPF0246 protein ASA_3634 (257 aa).

This sequence belongs to the UPF0246 family.

The polypeptide is UPF0246 protein ASA_3634 (Aeromonas salmonicida (strain A449)).